A 421-amino-acid polypeptide reads, in one-letter code: Proton/sodium-glutamate symport protein (421 aa).

The Cytoplasmic segment spans residues 1–3 (MRK). The helical transmembrane segment at 4–24 (IGLAWQIFIGLILGIIVGAIF) threads the bilayer. Residues 25 to 43 (YGNPKVAAYLQPIGDIFLR) are Extracellular-facing. A helical membrane pass occupies residues 44 to 64 (LIKMIVIPIVISSLVVGVASV). Over 65–77 (GDLKKLGKLGGKT) the chain is Cytoplasmic. The helical transmembrane segment at 78-98 (IIYFEIITTIAIVVGLLAANI) threads the bilayer. Residues 99–148 (FQPGAGVNMKSLEKTDIQSYVDTTNEVQHHSMVETFVNIVPKNIFESLST) are Extracellular-facing. A helical transmembrane segment spans residues 149–169 (GDMLPIIFFSVMFGLGVAAIG). The Cytoplasmic portion of the chain corresponds to 170 to 198 (EKGKPVLQFFQGTAEAMFYVTNQIMKFAP). The chain crosses the membrane as a helical span at residues 199–219 (FGVFALIGVTVSKFGVESLIP). Topologically, residues 220–222 (LSK) are extracellular. The helical transmembrane segment at 223-243 (LVIVVYATMLFFIFAVLGGVA) threads the bilayer. A topological domain (cytoplasmic) is located at residue lysine 244. A helical transmembrane segment spans residues 245–265 (LFGINIFHIIKILKDELILAY). Topologically, residues 266–306 (STASSETVLPRIMDKMEKFGCPKAITSFVIPTGYSFNLDGS) are extracellular. A helical membrane pass occupies residues 307 to 327 (TLYQALAAIFIAQLYGIDMSV). Residues 328–330 (SQQ) lie on the Cytoplasmic side of the membrane. A run of 2 helical transmembrane segments spans residues 331 to 351 (ISLL…PGVS) and 352 to 372 (FVVL…LAFI). The Cytoplasmic portion of the chain corresponds to 373-421 (AGIDRILDMARTAVNVIGNSLAAIIMSKWEGQYNEEKGKQYLAELQQSA).

The protein belongs to the dicarboxylate/amino acid:cation symporter (DAACS) (TC 2.A.23) family. In terms of assembly, homotrimer.

Its subcellular location is the cell membrane. In terms of biological role, this carrier protein is part of the Na(+)-dependent, binding-protein-independent glutamate-aspartate transport system. This chain is Proton/sodium-glutamate symport protein (gltT), found in Bacillus caldotenax.